The primary structure comprises 176 residues: Ribosome rescue factor SmrB (176 aa).

A Smr domain is found at 93–168 (LDLHGYRQSE…GDAALLVLID (76 aa)).

This sequence belongs to the SmrB family. Associates with collided ribosomes, but not with correctly translating polysomes.

Functionally, acts as a ribosome collision sensor. Detects stalled/collided disomes (pairs of ribosomes where the leading ribosome is stalled and a second ribosome has collided with it) and endonucleolytically cleaves mRNA at the 5' boundary of the stalled ribosome. Stalled/collided disomes form a new interface (primarily via the 30S subunits) that binds SmrB. Cleaved mRNA becomes available for tmRNA ligation, leading to ribosomal subunit dissociation and rescue of stalled ribosomes. This Shewanella oneidensis (strain ATCC 700550 / JCM 31522 / CIP 106686 / LMG 19005 / NCIMB 14063 / MR-1) protein is Ribosome rescue factor SmrB.